The following is a 707-amino-acid chain: MNPIVKTFQYGNHTVTLETGVMARQATAAVMASMDDTSVFVSVVGKKAAVEGQDFFPLTVNYQERTYAAGKIPGGFFKREGRPSEGETLTARLIDRPIRPLFPSAFKNEVQVIATVVSVNPEVNPDMITMIATSAALAISGLPFNGPIGAARVGFINDQFVLNPSNTELEESRLDLVVSGTKDAVLMVESEADRLSEETMLQAVVYGHDQQQVVINAINEFAAEVATPAWDWTAPVVNAELKARVADKAATRLSDAYQITEKMARYDEVGSIKNDVVASLLAEDETLDERELRGMLSSLEKHVVRGRIIAGHPRIDGREKDMVRALDVRTGVLPRTHGSSLFTRGETQALVTATLGTQRDAQIIDSIMGEKKDHFLLHYNFPPYCVGETGFVGSPKRREIGHGKLAKRGIAAVMPSVEEFPYTVRVVSEITESNGSSSMASVCGTSLALMDAGVPIKASVAGIAMGLVKEGDDFVVLSDILGDEDHLGDMDFKVAGTDDGITALQMDIKIEGITKEIMQIALNQAKGARKHILSVMDDAIGTHRDDISQFAPRIHTMKINSDKIKDVIGKGGAVIRALTEETGTTIEIEDDGTIKIAATEGAAAKEAIRRIEEITADVEVGRIYTGKVMRIVDFGAFVSVIGAKEGLVHISQIAQERVEKVSDHLQMGQEVQVKVLEIDRQGRIRLSMKEAVADQNPATVQDEQPQG.

Mg(2+)-binding residues include D485 and D491. Residues 552 to 611 form the KH domain; it reads PRIHTMKINSDKIKDVIGKGGAVIRALTEETGTTIEIEDDGTIKIAATEGAAAKEAIRRI. The 69-residue stretch at 621 to 689 folds into the S1 motif domain; it reads GRIYTGKVMR…RQGRIRLSMK (69 aa).

The protein belongs to the polyribonucleotide nucleotidyltransferase family. As to quaternary structure, component of the RNA degradosome, which is a multiprotein complex involved in RNA processing and mRNA degradation. Mg(2+) is required as a cofactor.

The protein resides in the cytoplasm. It catalyses the reaction RNA(n+1) + phosphate = RNA(n) + a ribonucleoside 5'-diphosphate. Functionally, involved in mRNA degradation. Catalyzes the phosphorolysis of single-stranded polyribonucleotides processively in the 3'- to 5'-direction. This chain is Polyribonucleotide nucleotidyltransferase, found in Photobacterium profundum (strain SS9).